The chain runs to 129 residues: Small ribosomal subunit protein uS11 (129 aa).

This sequence belongs to the universal ribosomal protein uS11 family. Part of the 30S ribosomal subunit. Interacts with proteins S7 and S18. Binds to IF-3.

Located on the platform of the 30S subunit, it bridges several disparate RNA helices of the 16S rRNA. Forms part of the Shine-Dalgarno cleft in the 70S ribosome. This chain is Small ribosomal subunit protein uS11, found in Haemophilus ducreyi (strain 35000HP / ATCC 700724).